Consider the following 260-residue polypeptide: Thiazole synthase (260 aa).

K96 serves as the catalytic Schiff-base intermediate with DXP. 1-deoxy-D-xylulose 5-phosphate is bound by residues G157, 184–185, and 206–207; these read AG and NT.

Belongs to the ThiG family. Homotetramer. Forms heterodimers with either ThiH or ThiS.

The protein localises to the cytoplasm. It catalyses the reaction [ThiS sulfur-carrier protein]-C-terminal-Gly-aminoethanethioate + 2-iminoacetate + 1-deoxy-D-xylulose 5-phosphate = [ThiS sulfur-carrier protein]-C-terminal Gly-Gly + 2-[(2R,5Z)-2-carboxy-4-methylthiazol-5(2H)-ylidene]ethyl phosphate + 2 H2O + H(+). Its pathway is cofactor biosynthesis; thiamine diphosphate biosynthesis. Its function is as follows. Catalyzes the rearrangement of 1-deoxy-D-xylulose 5-phosphate (DXP) to produce the thiazole phosphate moiety of thiamine. Sulfur is provided by the thiocarboxylate moiety of the carrier protein ThiS. In vitro, sulfur can be provided by H(2)S. The sequence is that of Thiazole synthase from Nitrobacter hamburgensis (strain DSM 10229 / NCIMB 13809 / X14).